The sequence spans 354 residues: Methylthioribose-1-phosphate isomerase (354 aa).

Residues 58–60, arginine 101, and glutamine 204 each bind substrate; that span reads RGA. The active-site Proton donor is the aspartate 245. 255–256 provides a ligand contact to substrate; the sequence is NK.

The protein belongs to the eIF-2B alpha/beta/delta subunits family. MtnA subfamily.

The enzyme catalyses 5-(methylsulfanyl)-alpha-D-ribose 1-phosphate = 5-(methylsulfanyl)-D-ribulose 1-phosphate. Its pathway is amino-acid biosynthesis; L-methionine biosynthesis via salvage pathway; L-methionine from S-methyl-5-thio-alpha-D-ribose 1-phosphate: step 1/6. Catalyzes the interconversion of methylthioribose-1-phosphate (MTR-1-P) into methylthioribulose-1-phosphate (MTRu-1-P). The protein is Methylthioribose-1-phosphate isomerase of Xanthomonas oryzae pv. oryzae (strain MAFF 311018).